The chain runs to 347 residues: Leucine-rich repeat-containing protein 69 (347 aa).

LRR repeat units follow at residues 15–37 (NTKI…EKLP), 38–60 (NLKT…RTLT), 61–82 (QLTL…IKYL), 84–105 (SLKN…VFNG), 108–129 (RLIM…IGRL), 131–152 (SLTY…LCSL), 154–175 (HLSE…IKFL), 177–198 (NLQQ…ICHL), and 200–222 (KLRV…QNLR).

This sequence belongs to the LRRC69 family.

This chain is Leucine-rich repeat-containing protein 69 (Lrrc69), found in Mus musculus (Mouse).